A 421-amino-acid chain; its full sequence is UDP-N-acetylglucosamine 1-carboxyvinyltransferase 1 (421 aa).

22–23 (KN) lines the phosphoenolpyruvate pocket. A UDP-N-acetyl-alpha-D-glucosamine-binding site is contributed by Arg95. Cys119 functions as the Proton donor in the catalytic mechanism. Position 119 is a 2-(S-cysteinyl)pyruvic acid O-phosphothioketal (Cys119). UDP-N-acetyl-alpha-D-glucosamine contacts are provided by residues 124–128 (RPIEQ), Asp308, and Val330.

This sequence belongs to the EPSP synthase family. MurA subfamily.

The protein localises to the cytoplasm. It carries out the reaction phosphoenolpyruvate + UDP-N-acetyl-alpha-D-glucosamine = UDP-N-acetyl-3-O-(1-carboxyvinyl)-alpha-D-glucosamine + phosphate. The protein operates within cell wall biogenesis; peptidoglycan biosynthesis. In terms of biological role, cell wall formation. Adds enolpyruvyl to UDP-N-acetylglucosamine. The sequence is that of UDP-N-acetylglucosamine 1-carboxyvinyltransferase 1 from Staphylococcus aureus (strain MRSA252).